The sequence spans 207 residues: Large ribosomal subunit protein uL4 (207 aa).

Residues His49–Ile78 are disordered. The segment covering Gly60 to Gly71 has biased composition (basic residues).

The protein belongs to the universal ribosomal protein uL4 family. As to quaternary structure, part of the 50S ribosomal subunit.

One of the primary rRNA binding proteins, this protein initially binds near the 5'-end of the 23S rRNA. It is important during the early stages of 50S assembly. It makes multiple contacts with different domains of the 23S rRNA in the assembled 50S subunit and ribosome. In terms of biological role, forms part of the polypeptide exit tunnel. This is Large ribosomal subunit protein uL4 from Latilactobacillus sakei subsp. sakei (strain 23K) (Lactobacillus sakei subsp. sakei).